A 153-amino-acid chain; its full sequence is Proline-rich membrane anchor 1 (153 aa).

Residues 1–35 (MLLRDLVPRHGCCWPSLLLHCALHPLWGLVQVTHA) form the signal peptide. The Extracellular portion of the chain corresponds to 36–92 (EPQKSCSKVTDSCQHICQCRPPPPLPPPPPPPPPPRLLSAPAPNSTSCPAEDSWWSG). One can recognise a PRAD domain in the interval 56-70 (PPPPLPPPPPPPPPP). The span at 59–71 (PLPPPPPPPPPPR) shows a compositional bias: pro residues. Residues 59 to 79 (PLPPPPPPPPPPRLLSAPAPN) are disordered. Asparagine 79 is a glycosylation site (N-linked (GlcNAc...) asparagine). A helical transmembrane segment spans residues 93-113 (LVIIVAVVCASLVFLTVLVII). At 114 to 153 (CYKAIKRKPLRKDENGTSVAEYPMSSSQSHKGVDVNAAVV) the chain is on the cytoplasmic side. Residues 129-153 (GTSVAEYPMSSSQSHKGVDVNAAVV) form a disordered region.

Interacts with ACHE, probably through disulfide bonds. In terms of tissue distribution, predominantly expressed in the central nervous system, including in the brain. Also expressed in muscle, heart and kidney. Isoform 1 may be predominant in the cortex and striatum, while isoform 2 is more abundant in the cerebellum.

It is found in the cell membrane. Its subcellular location is the cell junction. It localises to the synapse. Functionally, required to anchor acetylcholinesterase (ACHE) to the basal lamina of the neuromuscular junction and to the membrane of neuronal synapses in brain. Also able to organize ACHE into tetramers. This Mus musculus (Mouse) protein is Proline-rich membrane anchor 1 (Prima1).